A 168-amino-acid chain; its full sequence is Protein DESIGUAL 2 (168 aa).

The N-terminal stretch at 1–20 is a signal peptide; it reads MARNVGFFICILILAMDVSA. Transmembrane regions (helical) follow at residues 56–76, 94–114, and 133–153; these read LAAC…GGCL, AVAS…MLIV, and VLSI…AYYI.

It belongs to the DESIGUAL family. In terms of tissue distribution, mainly expressed in roots, inflorescences and developing leaves, and, at low levels, in mature leaves.

The protein localises to the endoplasmic reticulum membrane. In terms of biological role, involved, partially redundantly with VCC/DEAL1 and DEAL3, to ensure bilateral symmetry development and early leaf margin patterning, probably via the regulation of auxin and CUC2 distribution. This is Protein DESIGUAL 2 from Arabidopsis thaliana (Mouse-ear cress).